We begin with the raw amino-acid sequence, 709 residues long: MGPRIGPAGEVPQVPDKETKATMGTENTPGGKASPDPQDVRPSVFHNIKLFVLCHSLLQLAQLMISGYLKSSISTVEKRFGLSSQTSGLLASFNEVGNTALIVFVSYFGSRVHRPRMIGYGAILVALAGLLMTLPHFISEPYRYDNTSPEDMPQDFKASLCLPTTSAPASAPSNGNCSSYTETQHLSVVGIMFVAQTLLGVGGVPIQPFGISYIDDFAHNSNSPLYLGILFAVTMMGPGLAFGLGSLMLRLYVDINQMPEGGISLTIKDPRWVGAWWLGFLIAAGAVALAAIPYFFFPKEMPKEKRELQFRRKVLAVTDSPARKGKDSPSKQSPGESTKKQDGLVQIAPNLTVIQFIKVFPRVLLQTLRHPIFLLVVLSQVCLSSMAAGMATFLPKFLERQFSITASYANLLIGCLSFPSVIVGIVVGGVLVKRLHLGPVGCGALCLLGMLLCLFFSLPLFFIGCSSHQIAGITHQTSAHPGLELSPSCMEACSCPLDGFNPVCDPSTRVEYITPCHAGCSSWVVQDALDNSQVFYTNCSCVVEGNPVLAGSCDSTCSHLVVPFLLLVSLGSALACLTHTPSFMLILRGVKKEDKTLAVGIQFMFLRILAWMPSPVIHGSAIDTTCVHWALSCGRRAVCRYYNNDLLRNRFIGLQFFFKTGSVICFALVLAVLRQQDKEARTKESRSSPAVEQQLLVSGPGKKPEDSRV.

A disordered region spans residues 1–38; the sequence is MGPRIGPAGEVPQVPDKETKATMGTENTPGGKASPDPQ. Residues 1-49 are Cytoplasmic-facing; it reads MGPRIGPAGEVPQVPDKETKATMGTENTPGGKASPDPQDVRPSVFHNIK. At S34 the chain carries Phosphoserine. Residues 50–69 traverse the membrane as a helical segment; it reads LFVLCHSLLQLAQLMISGYL. The segment at 51-69 is required for E1S and taurocholate transport; required for transporter stability; sequence FVLCHSLLQLAQLMISGYL. The Extracellular segment spans residues 70 to 88; the sequence is KSSISTVEKRFGLSSQTSG. Residues 89–109 form a helical membrane-spanning segment; sequence LLASFNEVGNTALIVFVSYFG. At 110-115 the chain is on the cytoplasmic side; sequence SRVHRP. Residues 116-140 form a helical membrane-spanning segment; sequence RMIGYGAILVALAGLLMTLPHFISE. Residues 141–185 are Extracellular-facing; that stretch reads PYRYDNTSPEDMPQDFKASLCLPTTSAPASAPSNGNCSSYTETQH. N176 carries N-linked (GlcNAc...) asparagine glycosylation. The chain crosses the membrane as a helical span at residues 186–215; it reads LSVVGIMFVAQTLLGVGGVPIQPFGISYID. The Cytoplasmic segment spans residues 216–234; sequence DFAHNSNSPLYLGILFAVT. Residues 235–255 traverse the membrane as a helical segment; the sequence is MMGPGLAFGLGSLMLRLYVDI. Residues 256 to 273 lie on the Extracellular side of the membrane; the sequence is NQMPEGGISLTIKDPRWV. A helical membrane pass occupies residues 274-298; the sequence is GAWWLGFLIAAGAVALAAIPYFFFP. The Cytoplasmic segment spans residues 299–366; the sequence is KEMPKEKREL…IKVFPRVLLQ (68 aa). T318 bears the Phosphothreonine mark. The disordered stretch occupies residues 319-342; that stretch reads DSPARKGKDSPSKQSPGESTKKQD. S320 carries the post-translational modification Phosphoserine. Residues 367-388 form a helical membrane-spanning segment; the sequence is TLRHPIFLLVVLSQVCLSSMAA. Residues 389–408 lie on the Extracellular side of the membrane; sequence GMATFLPKFLERQFSITASY. The helical transmembrane segment at 409-432 threads the bilayer; the sequence is ANLLIGCLSFPSVIVGIVVGGVLV. The Cytoplasmic portion of the chain corresponds to 433–436; it reads KRLH. The helical transmembrane segment at 437 to 460 threads the bilayer; sequence LGPVGCGALCLLGMLLCLFFSLPL. Over 461–564 the chain is Extracellular; it reads FFIGCSSHQI…STCSHLVVPF (104 aa). Residues 483–543 enclose the Kazal-like domain; sequence LELSPSCMEA…VFYTNCSCVV (61 aa). 3 disulfides stabilise this stretch: C489-C520, C495-C516, and C504-C541. An N-linked (GlcNAc...) asparagine glycan is attached at N538. A helical membrane pass occupies residues 565 to 587; that stretch reads LLLVSLGSALACLTHTPSFMLIL. The Cytoplasmic segment spans residues 588-596; that stretch reads RGVKKEDKT. Residues 597–622 traverse the membrane as a helical segment; that stretch reads LAVGIQFMFLRILAWMPSPVIHGSAI. Over 623-655 the chain is Extracellular; sequence DTTCVHWALSCGRRAVCRYYNNDLLRNRFIGLQ. The chain crosses the membrane as a helical span at residues 656–673; the sequence is FFFKTGSVICFALVLAVL. At 674–709 the chain is on the cytoplasmic side; the sequence is RQQDKEARTKESRSSPAVEQQLLVSGPGKKPEDSRV. The tract at residues 679 to 709 is disordered; that stretch reads EARTKESRSSPAVEQQLLVSGPGKKPEDSRV.

This sequence belongs to the organo anion transporter (TC 2.A.60) family. In terms of tissue distribution, strongly expressed in the liver, at the sinusoidal membrane of the hepatocytes. Expressed in the kidney. Expressed in placental trophoblasts and syncytiotrophoblast. Expressed in the small intestine. Expressed in the blood-brain barrier, in endothelial cells of brain capillaries. Expressed in the retina, in the inner nuclear layer and the inner plexiform layer. Expressed in skelettal muscles. In testis, primarily localized to the basal membrane of Sertoli cells and weakly expressed within the tubules. Also expressed in pancreas, lung, heart, colon, ovary and spleen. Expressed in fetal brain, heart, kidney, liver, lung, skeletal muscle, spleen and pancreas. Highest expression in brain. Predominant isoform compared to isoform 3 in small intestine duodenum, kidney, placenta, and skeletal muscle. As to expression, predominant isoform compared to isoform 1 in liver. Also expressed in small intestine duodenum, kidney, brain, placenta, and skeletal muscle.

The protein localises to the cell membrane. Its subcellular location is the basal cell membrane. The protein resides in the basolateral cell membrane. It is found in the apical cell membrane. The catalysed reaction is dehydroepiandrosterone 3-sulfate(out) = dehydroepiandrosterone 3-sulfate(in). It catalyses the reaction estrone 3-sulfate(out) = estrone 3-sulfate(in). It carries out the reaction estrone 3-sulfate(out) + hydrogencarbonate(in) = estrone 3-sulfate(in) + hydrogencarbonate(out). The enzyme catalyses taurocholate(out) = taurocholate(in). The catalysed reaction is coproporphyrin III(out) = coproporphyrin III(in). It catalyses the reaction substance P(out) = substance P(in). It carries out the reaction pregnenolone sulfate(out) = pregnenolone sulfate(in). The enzyme catalyses prostaglandin E2(out) = prostaglandin E2(in). The catalysed reaction is prostaglandin D2(out) = prostaglandin D2(in). It catalyses the reaction L-thyroxine(out) = L-thyroxine(in). With respect to regulation, E1S, DHEA-S and PregS transports are regulated by steroid hormones. In the case of testosterone, transport of E1S and DHEA-S was inhibited, whereas progesterone stimulated E1S, DHEA-S and PregS uptake. Progesterone stimulates high-affinity uptake of E1S whereas it inhibits low-affinity uptake of E1S. Progesterone doesn't affect the uptake of PGE2. Its function is as follows. Mediates the Na(+)-independent transport of steroid sulfate conjugates and other specific organic anions. Responsible for the transport of estrone 3-sulfate (E1S) through the basal membrane of syncytiotrophoblast, highlighting a potential role in the placental absorption of fetal-derived sulfated steroids including the steroid hormone precursor dehydroepiandrosterone sulfate (DHEA-S). Also facilitates the uptake of sulfated steroids at the basal/sinusoidal membrane of hepatocytes, therefore accounting for the major part of organic anions clearance of liver. Mediates the intestinal uptake of sulfated steroids. Mediates the uptake of the neurosteroids DHEA-S and pregnenolone sulfate (PregS) into the endothelial cells of the blood-brain barrier as the first step to enter the brain. Also plays a role in the reuptake of neuropeptides such as substance P/TAC1 and vasoactive intestinal peptide/VIP released from retinal neurons. May act as a heme transporter that promotes cellular iron availability via heme oxygenase/HMOX2 and independently of TFRC. Also transports heme by-product coproporphyrin III (CPIII), and may be involved in their hepatic disposition. Mediates the uptake of other substrates such as prostaglandins D2 (PGD2), E1 (PGE1) and E2 (PGE2), taurocholate, L-thyroxine, leukotriene C4 and thromboxane B2. May contribute to regulate the transport of organic compounds in testis across the blood-testis-barrier. Shows a pH-sensitive substrate specificity which may be ascribed to the protonation state of the binding site and leads to a stimulation of substrate transport in an acidic microenvironment. The exact transport mechanism has not been yet deciphered but most likely involves an anion exchange, coupling the cellular uptake of organic substrate with the efflux of an anionic compound. Hydrogencarbonate/HCO3(-) acts as a probable counteranion that exchanges for organic anions. Cytoplasmic glutamate may also act as counteranion in the placenta. An inwardly directed proton gradient has also been proposed as the driving force of E1S uptake with a (H(+):E1S) stoichiometry of (1:1). Has estrone 3-sulfate (E1S) transport activity comparable with the full-length isoform 1. In Homo sapiens (Human), this protein is Solute carrier organic anion transporter family member 2B1.